Consider the following 424-residue polypeptide: Protein UL117 (424 aa).

The interval 57–82 (IVPTTSSSLAPPRDDERRPTPPLRPP) is disordered.

The protein belongs to the herpesviridae U84 family.

It is found in the host nucleus. In terms of biological role, plays a role in the inhibition of host DNA replication in the infected cell. Targets the mini-chromosome maintenance (MCM) complex and blocks the accumulation of MCM proteins and their loading onto host chromatin. In Human cytomegalovirus (strain AD169) (HHV-5), this protein is Protein UL117 (UL117).